The chain runs to 332 residues: Holliday junction branch migration complex subunit RuvB (332 aa).

A large ATPase domain (RuvB-L) region spans residues 1-181 (MTRFLDSDAM…FGITGHMEYY (181 aa)). Residues L20, R21, G62, K65, T66, T67, 128–130 (EDF), R171, Y181, and R218 each bind ATP. T66 is a binding site for Mg(2+). Positions 182–252 (EENDLTEIIE…ITDKALTMLD (71 aa)) are small ATPAse domain (RuvB-S). A head domain (RuvB-H) region spans residues 255–332 (HEGLDYVDQK…EHLGYQRFDK (78 aa)). DNA contacts are provided by R291, R310, R312, and R315.

Belongs to the RuvB family. In terms of assembly, homohexamer. Forms an RuvA(8)-RuvB(12)-Holliday junction (HJ) complex. HJ DNA is sandwiched between 2 RuvA tetramers; dsDNA enters through RuvA and exits via RuvB. An RuvB hexamer assembles on each DNA strand where it exits the tetramer. Each RuvB hexamer is contacted by two RuvA subunits (via domain III) on 2 adjacent RuvB subunits; this complex drives branch migration. In the full resolvosome a probable DNA-RuvA(4)-RuvB(12)-RuvC(2) complex forms which resolves the HJ.

It is found in the cytoplasm. It catalyses the reaction ATP + H2O = ADP + phosphate + H(+). In terms of biological role, the RuvA-RuvB-RuvC complex processes Holliday junction (HJ) DNA during genetic recombination and DNA repair, while the RuvA-RuvB complex plays an important role in the rescue of blocked DNA replication forks via replication fork reversal (RFR). RuvA specifically binds to HJ cruciform DNA, conferring on it an open structure. The RuvB hexamer acts as an ATP-dependent pump, pulling dsDNA into and through the RuvAB complex. RuvB forms 2 homohexamers on either side of HJ DNA bound by 1 or 2 RuvA tetramers; 4 subunits per hexamer contact DNA at a time. Coordinated motions by a converter formed by DNA-disengaged RuvB subunits stimulates ATP hydrolysis and nucleotide exchange. Immobilization of the converter enables RuvB to convert the ATP-contained energy into a lever motion, pulling 2 nucleotides of DNA out of the RuvA tetramer per ATP hydrolyzed, thus driving DNA branch migration. The RuvB motors rotate together with the DNA substrate, which together with the progressing nucleotide cycle form the mechanistic basis for DNA recombination by continuous HJ branch migration. Branch migration allows RuvC to scan DNA until it finds its consensus sequence, where it cleaves and resolves cruciform DNA. In Streptococcus agalactiae serotype Ia (strain ATCC 27591 / A909 / CDC SS700), this protein is Holliday junction branch migration complex subunit RuvB.